Reading from the N-terminus, the 491-residue chain is Monodehydroascorbate reductase 5, chlorplastic (491 aa).

The transit peptide at 1 to 42 directs the protein to the chloroplast; the sequence is MASTAAAASSQGCISWALRQRGLGGGGARAVPVLPRRRFCVS. Residues 61 to 64, Glu88, Arg95, Lys100, and 194 to 195 contribute to the FAD site; these read GGNA and RD. NAD(+)-binding positions include 217–223, Glu241, Arg247, and Gly306; that span reads GGYIGME. Residue 219–223 participates in NADP(+) binding; sequence YIGME. 2 residues coordinate NADP(+): Arg247 and Gly306. Asp344 contributes to the FAD binding site. 360–361 serves as a coordination point for NAD(+); sequence EH. Residue 360 to 361 participates in NADP(+) binding; the sequence is EH. Residue Val362 coordinates FAD. Position 366 (Arg366) interacts with L-ascorbate. Tyr391 contributes to the FAD binding site. Tyr391 serves as a coordination point for NAD(+). Tyr391 lines the NADP(+) pocket. Residue Arg393 coordinates L-ascorbate.

Belongs to the FAD-dependent oxidoreductase family. The cofactor is FAD.

The protein localises to the plastid. Its subcellular location is the chloroplast. It catalyses the reaction 2 monodehydro-L-ascorbate radical + NADH + H(+) = 2 L-ascorbate + NAD(+). In terms of biological role, catalyzes the conversion of monodehydroascorbate to ascorbate, oxidizing NADH in the process. Ascorbate is a major antioxidant against reactive oxygen species (ROS) and nitric oxide (NO). The chain is Monodehydroascorbate reductase 5, chlorplastic from Oryza sativa subsp. japonica (Rice).